Consider the following 492-residue polypeptide: Protein adenylyltransferase Fic (492 aa).

Over residues 1-17 (MCTEAEQPSPPAQQQEQ) the composition is skewed to low complexity. The tract at residues 1-25 (MCTEAEQPSPPAQQQEQGNPPLCKA) is disordered. Residues 33 to 55 (LYRLVLLFVAGSLAAWTFHALSS) traverse the membrane as a helical segment. TPR repeat units lie at residues 118 to 151 (ALGALRMAQDLYLAGKDDKAARLFEHALALAPRH) and 152 to 186 (PEVLLRYGEFLEHNQRNIVLADQYYFQALTISPSN). The Inhibitory (S/T)XXXE(G/N) motif motif lies at 243-248 (SVGIEG). Residues E247 and 328-331 (VGGH) each bind ATP. The Fido domain occupies 297-432 (ITIKDILELH…IRPFVRFIAD (136 aa)). The active site involves H375. ATP is bound by residues 379 to 386 (DGNGRTSR), 411 to 412 (YY), and N419.

It belongs to the fic family. In terms of assembly, homodimer.

The protein localises to the membrane. It catalyses the reaction L-tyrosyl-[protein] + ATP = O-(5'-adenylyl)-L-tyrosyl-[protein] + diphosphate. It carries out the reaction L-threonyl-[protein] + ATP = 3-O-(5'-adenylyl)-L-threonyl-[protein] + diphosphate. The catalysed reaction is 3-O-(5'-adenylyl)-L-threonyl-[protein] + H2O = L-threonyl-[protein] + AMP + H(+). Its activity is regulated as follows. The side chain of Glu-247 determines which of the two opposing activities (AMPylase or de-AMPylase) will take place. In response to endoplasmic reticulum stress, mediates de-AMPylase activity. Adenylyltransferase activity is inhibited by the inhibitory helix present at the N-terminus: Glu-247 binds ATP and competes with ATP-binding at Arg-386, thereby preventing adenylyltransferase activity. In unstressed cells, disengagement of Glu-247 promotes adenylyltransferase activity. Activation dissociates ATP-binding from Glu-247, allowing ordered binding of the entire ATP moiety with the alpha-phosphate in an orientation that is productive for accepting an incoming target hydroxyl side chain. Functionally, protein that can both mediate the addition of adenosine 5'-monophosphate (AMP) to specific residues of target proteins (AMPylation), and the removal of the same modification from target proteins (de-AMPylation), depending on the context. The side chain of Glu-247 determines which of the two opposing activities (AMPylase or de-AMPylase) will take place. Acts as a key regulator of the unfolded protein response (UPR) by mediating AMPylation or de-AMPylation of Hsc70-3/BiP. In unstressed cells, acts as an adenylyltransferase by mediating AMPylation of Hsc70-3/BiP at 'Thr-518', thereby inactivating it. In response to endoplasmic reticulum stress, acts as a phosphodiesterase by mediating removal of ATP (de-AMPylation) from Hsc70-3/BiP at 'Thr-518', leading to restore HSPA5/BiP activity. In Drosophila sechellia (Fruit fly), this protein is Protein adenylyltransferase Fic.